The following is a 211-amino-acid chain: Uridine kinase (211 aa).

Position 15–22 (15–22) interacts with ATP; that stretch reads GGSGSGKT.

Belongs to the uridine kinase family.

The protein localises to the cytoplasm. It carries out the reaction uridine + ATP = UMP + ADP + H(+). The catalysed reaction is cytidine + ATP = CMP + ADP + H(+). Its pathway is pyrimidine metabolism; CTP biosynthesis via salvage pathway; CTP from cytidine: step 1/3. It participates in pyrimidine metabolism; UMP biosynthesis via salvage pathway; UMP from uridine: step 1/1. This is Uridine kinase from Lactobacillus helveticus (strain DPC 4571).